The sequence spans 612 residues: Glycosyltransferase 25 family member (612 aa).

Residues 1–20 form the signal peptide; that stretch reads MNKQVIFGLLLACILVCISG. Residues N106, N227, N263, and N524 are each glycosylated (N-linked (GlcNAc...) asparagine). The short motif at 609–612 is the Prevents secretion from ER element; it reads HQEL.

Belongs to the glycosyltransferase 25 family.

It localises to the endoplasmic reticulum lumen. This is Glycosyltransferase 25 family member from Drosophila melanogaster (Fruit fly).